Consider the following 752-residue polypeptide: Photosystem I P700 chlorophyll a apoprotein A1 (752 aa).

A run of 8 helical transmembrane segments spans residues 73-96, 159-182, 198-222, 294-312, 349-372, 388-414, 436-458, and 533-551; these read IFSA…FHGA, LYWI…FHYH, MNHH…HVAL, IAHH…GHMY, WHAQ…HHMY, LSLF…IFMV, SIIA…FYIH, and FMVH…LILL. Residues cysteine 575 and cysteine 584 each contribute to the [4Fe-4S] cluster site. Helical transmembrane passes span 591–612 and 666–688; these read HVFL…HFSW and ASAY…MFLF. Histidine 677 is a binding site for chlorophyll a'. 2 residues coordinate chlorophyll a: methionine 685 and tyrosine 693. Residue tryptophan 694 coordinates phylloquinone. Residues 726–746 traverse the membrane as a helical segment; that stretch reads AVGLAHYLLGGIGTTWAFFLA.

The protein belongs to the PsaA/PsaB family. In terms of assembly, the PsaA/B heterodimer binds the P700 chlorophyll special pair and subsequent electron acceptors. PSI consists of a core antenna complex that captures photons, and an electron transfer chain that converts photonic excitation into a charge separation. The eukaryotic PSI reaction center is composed of at least 11 subunits. P700 is a chlorophyll a/chlorophyll a' dimer, A0 is one or more chlorophyll a, A1 is one or both phylloquinones and FX is a shared 4Fe-4S iron-sulfur center. is required as a cofactor.

It localises to the plastid. Its subcellular location is the chloroplast thylakoid membrane. The catalysed reaction is reduced [plastocyanin] + hnu + oxidized [2Fe-2S]-[ferredoxin] = oxidized [plastocyanin] + reduced [2Fe-2S]-[ferredoxin]. In terms of biological role, psaA and PsaB bind P700, the primary electron donor of photosystem I (PSI), as well as the electron acceptors A0, A1 and FX. PSI is a plastocyanin/cytochrome c6-ferredoxin oxidoreductase, converting photonic excitation into a charge separation, which transfers an electron from the donor P700 chlorophyll pair to the spectroscopically characterized acceptors A0, A1, FX, FA and FB in turn. Oxidized P700 is reduced on the lumenal side of the thylakoid membrane by plastocyanin or cytochrome c6. This is Photosystem I P700 chlorophyll a apoprotein A1 from Phaeodactylum tricornutum (strain CCAP 1055/1).